The following is a 305-amino-acid chain: NAD kinase (305 aa).

The active-site Proton acceptor is the Asp88. Residues 88-89 (DG), Arg93, 162-163 (NE), Lys173, Asn192, 203-208 (TAYSFS), and Gln262 contribute to the NAD(+) site.

It belongs to the NAD kinase family. A divalent metal cation is required as a cofactor.

The protein resides in the cytoplasm. The enzyme catalyses NAD(+) + ATP = ADP + NADP(+) + H(+). Its function is as follows. Involved in the regulation of the intracellular balance of NAD and NADP, and is a key enzyme in the biosynthesis of NADP. Catalyzes specifically the phosphorylation on 2'-hydroxyl of the adenosine moiety of NAD to yield NADP. This chain is NAD kinase, found in Tropheryma whipplei (strain TW08/27) (Whipple's bacillus).